The following is a 498-amino-acid chain: Glycerol kinase (498 aa).

Thr-11 provides a ligand contact to ADP. Residues Thr-11, Ser-12, and Ser-13 each contribute to the ATP site. Thr-11 provides a ligand contact to sn-glycerol 3-phosphate. Position 15 (Arg-15) interacts with ADP. Sn-glycerol 3-phosphate is bound by residues Arg-81, Glu-82, Tyr-133, and Asp-242. Residues Arg-81, Glu-82, Tyr-133, Asp-242, and Gln-243 each contribute to the glycerol site. Residues Thr-264 and Gly-307 each coordinate ADP. ATP is bound by residues Thr-264, Gly-307, Gln-311, and Gly-412. Residues Gly-412 and Asn-416 each contribute to the ADP site.

It belongs to the FGGY kinase family.

It catalyses the reaction glycerol + ATP = sn-glycerol 3-phosphate + ADP + H(+). Its pathway is polyol metabolism; glycerol degradation via glycerol kinase pathway; sn-glycerol 3-phosphate from glycerol: step 1/1. Inhibited by fructose 1,6-bisphosphate (FBP). Functionally, key enzyme in the regulation of glycerol uptake and metabolism. Catalyzes the phosphorylation of glycerol to yield sn-glycerol 3-phosphate. The chain is Glycerol kinase from Delftia acidovorans (strain DSM 14801 / SPH-1).